The chain runs to 538 residues: CTP synthase (538 aa).

An amidoligase domain region spans residues 1–265 (MARYIFVTGG…DLQVLNYFKL (265 aa)). A CTP-binding site is contributed by Ser-13. UTP is bound at residue Ser-13. ATP-binding positions include 14 to 19 (SLGKGL) and Asp-71. Residues Asp-71 and Glu-139 each contribute to the Mg(2+) site. CTP contacts are provided by residues 146-148 (DIE), 186-191 (KTKPTQ), and Lys-222. UTP-binding positions include 186–191 (KTKPTQ) and Lys-222. The Glutamine amidotransferase type-1 domain maps to 291–538 (NIAIIGKYVE…SFIKAAKNHK (248 aa)). L-glutamine is bound at residue Gly-353. The Nucleophile; for glutamine hydrolysis role is filled by Cys-380. Residues 381 to 384 (YGMQ), Glu-404, and Arg-468 each bind L-glutamine. Residues His-513 and Glu-515 contribute to the active site.

This sequence belongs to the CTP synthase family. As to quaternary structure, homotetramer.

The enzyme catalyses UTP + L-glutamine + ATP + H2O = CTP + L-glutamate + ADP + phosphate + 2 H(+). It catalyses the reaction L-glutamine + H2O = L-glutamate + NH4(+). The catalysed reaction is UTP + NH4(+) + ATP = CTP + ADP + phosphate + 2 H(+). Its pathway is pyrimidine metabolism; CTP biosynthesis via de novo pathway; CTP from UDP: step 2/2. Its activity is regulated as follows. Allosterically activated by GTP, when glutamine is the substrate; GTP has no effect on the reaction when ammonia is the substrate. The allosteric effector GTP functions by stabilizing the protein conformation that binds the tetrahedral intermediate(s) formed during glutamine hydrolysis. Inhibited by the product CTP, via allosteric rather than competitive inhibition. In terms of biological role, catalyzes the ATP-dependent amination of UTP to CTP with either L-glutamine or ammonia as the source of nitrogen. Regulates intracellular CTP levels through interactions with the four ribonucleotide triphosphates. The chain is CTP synthase from Pelagibacter ubique (strain HTCC1062).